Here is a 423-residue protein sequence, read N- to C-terminus: Phosphoribosylamine--glycine ligase (423 aa).

The 208-residue stretch at 107–314 (KAFMAKYNIP…LSDLVEAAID (208 aa)) folds into the ATP-grasp domain. Residue 133–194 (VNQKGAPIVI…EDFLQGEEAS (62 aa)) coordinates ATP. 2 residues coordinate Mg(2+): Glu-284 and Asn-286.

It belongs to the GARS family. Requires Mg(2+) as cofactor. Mn(2+) is required as a cofactor.

The enzyme catalyses 5-phospho-beta-D-ribosylamine + glycine + ATP = N(1)-(5-phospho-beta-D-ribosyl)glycinamide + ADP + phosphate + H(+). The protein operates within purine metabolism; IMP biosynthesis via de novo pathway; N(1)-(5-phospho-D-ribosyl)glycinamide from 5-phospho-alpha-D-ribose 1-diphosphate: step 2/2. This Neisseria meningitidis serogroup A / serotype 4A (strain DSM 15465 / Z2491) protein is Phosphoribosylamine--glycine ligase.